Here is a 72-residue protein sequence, read N- to C-terminus: Long neurotoxin 1 (72 aa).

5 cysteine pairs are disulfide-bonded: C3–C21, C14–C42, C27–C31, C46–C57, and C58–C63.

It belongs to the three-finger toxin family. Long-chain subfamily. Type II alpha-neurotoxin sub-subfamily. Expressed by the venom gland.

The protein localises to the secreted. Binds with high affinity to muscular (alpha-1/CHRNA1) and neuronal (alpha-7/CHRNA7) nicotinic acetylcholine receptor (nAChR) and inhibits acetylcholine from binding to the receptor, thereby impairing neuromuscular and neuronal transmission. In Naja anchietae (Anchieta's cobra), this protein is Long neurotoxin 1.